Here is a 370-residue protein sequence, read N- to C-terminus: Dual-specificity RNA methyltransferase RlmN (370 aa).

Glu-93 serves as the catalytic Proton acceptor. Residues 99-337 form the Radical SAM core domain; that stretch reads AEGRGTLCVS…VTTVRKTRGD (239 aa). Cysteines 106 and 343 form a disulfide. [4Fe-4S] cluster-binding residues include Cys-113, Cys-117, and Cys-120. Residues 167 to 168, Ser-199, 221 to 223, and Asn-300 each bind S-adenosyl-L-methionine; these read GE and SLH. Cys-343 (S-methylcysteine intermediate) is an active-site residue.

The protein belongs to the radical SAM superfamily. RlmN family. [4Fe-4S] cluster is required as a cofactor.

Its subcellular location is the cytoplasm. It catalyses the reaction adenosine(2503) in 23S rRNA + 2 reduced [2Fe-2S]-[ferredoxin] + 2 S-adenosyl-L-methionine = 2-methyladenosine(2503) in 23S rRNA + 5'-deoxyadenosine + L-methionine + 2 oxidized [2Fe-2S]-[ferredoxin] + S-adenosyl-L-homocysteine. It carries out the reaction adenosine(37) in tRNA + 2 reduced [2Fe-2S]-[ferredoxin] + 2 S-adenosyl-L-methionine = 2-methyladenosine(37) in tRNA + 5'-deoxyadenosine + L-methionine + 2 oxidized [2Fe-2S]-[ferredoxin] + S-adenosyl-L-homocysteine. Its function is as follows. Specifically methylates position 2 of adenine 2503 in 23S rRNA and position 2 of adenine 37 in tRNAs. m2A2503 modification seems to play a crucial role in the proofreading step occurring at the peptidyl transferase center and thus would serve to optimize ribosomal fidelity. This chain is Dual-specificity RNA methyltransferase RlmN, found in Francisella tularensis subsp. tularensis (strain FSC 198).